The sequence spans 607 residues: Actin-related protein 5 (607 aa).

A Glycyl lysine isopeptide (Lys-Gly) (interchain with G-Cter in SUMO2) cross-link involves residue lysine 283. Coiled-coil stretches lie at residues 288–327 (TLTS…LDRL) and 355–384 (EELQ…NLEV). A compositionally biased stretch (low complexity) spans 584–596 (SRSSDAQASSKGS). The interval 584 to 607 (SRSSDAQASSKGSAAGGGGAGEQA) is disordered. Residues 597–607 (AAGGGGAGEQA) are compositionally biased toward gly residues.

The protein belongs to the actin family. ARP5 subfamily. Component of the chromatin remodeling INO80 complex; specifically part of a complex module associated with the helicase ATP-binding and the helicase C-terminal domain of INO80. Interacts with DDB1. Interacts with ACTR8; the interaction is observed in asynchronous (interphase) cells but not in metaphase-arrested cells indicative for a possible dissociation of the INO80 complex in mitotic cells.

It localises to the nucleus. Its subcellular location is the cytoplasm. Proposed core component of the chromatin remodeling INO80 complex which is involved in transcriptional regulation, DNA replication and probably DNA repair. Involved in DNA double-strand break repair and UV-damage excision repair. This chain is Actin-related protein 5 (ACTR5), found in Homo sapiens (Human).